We begin with the raw amino-acid sequence, 78 residues long: NAD(P)H-quinone oxidoreductase subunit O (78 aa).

The protein belongs to the complex I NdhO subunit family. In terms of assembly, NDH-1 can be composed of about 15 different subunits; different subcomplexes with different compositions have been identified which probably have different functions.

It is found in the cellular thylakoid membrane. It catalyses the reaction a plastoquinone + NADH + (n+1) H(+)(in) = a plastoquinol + NAD(+) + n H(+)(out). It carries out the reaction a plastoquinone + NADPH + (n+1) H(+)(in) = a plastoquinol + NADP(+) + n H(+)(out). In terms of biological role, NDH-1 shuttles electrons from an unknown electron donor, via FMN and iron-sulfur (Fe-S) centers, to quinones in the respiratory and/or the photosynthetic chain. The immediate electron acceptor for the enzyme in this species is believed to be plastoquinone. Couples the redox reaction to proton translocation, and thus conserves the redox energy in a proton gradient. Cyanobacterial NDH-1 also plays a role in inorganic carbon-concentration. This is NAD(P)H-quinone oxidoreductase subunit O from Prochlorococcus marinus (strain MIT 9215).